Here is a 329-residue protein sequence, read N- to C-terminus: Prostaglandin reductase 1 (329 aa).

At T18 the chain carries Phosphothreonine. Residues 152–155 (GAVG), K178, Y193, N217, 239–245 (CGAISQY), 270–272 (FIV), and N321 each bind NADP(+). The residue at position 178 (K178) is an N6-(2-hydroxyisobutyryl)lysine; alternate. Position 178 is an N6-acetyllysine; alternate (K178).

This sequence belongs to the NADP-dependent oxidoreductase L4BD family. Monomer or homodimer.

It is found in the cytoplasm. The enzyme catalyses 13,14-dihydro-15-oxo-prostaglandin E1 + NADP(+) = 15-oxoprostaglandin E1 + NADPH + H(+). It carries out the reaction 13,14-dihydro-15-oxo-prostaglandin E2 + NADP(+) = 15-oxoprostaglandin E2 + NADPH + H(+). It catalyses the reaction 13,14-dihydro-15-oxo-prostaglandin F1alpha + NADP(+) = 15-oxoprostaglandin F1alpha + NADPH + H(+). The catalysed reaction is 13,14-dihydro-15-oxo-PGF2alpha + NADP(+) = 15-oxoprostaglandin F2alpha + NADPH + H(+). The enzyme catalyses leukotriene B4 + NADP(+) = 12-oxo-leukotriene B4 + NADPH + H(+). It carries out the reaction 20-hydroxy-leukotriene B4 + NADP(+) = 12-oxo-20-hydroxy-leukotriene B4 + NADPH + H(+). It catalyses the reaction 6-trans-leukotriene B4 + NADP(+) = 12-oxo-(5S)-hydroxy-(6E,8E,10E,14Z)-eicosatetraenoate + NADPH + H(+). The catalysed reaction is (5S,12S)-dihydroxy-(6E,10E,12E,14Z)-eicosatetraenoate + NADP(+) = 12-oxo-(5S)-hydroxy-(6E,8E,10E,14Z)-eicosatetraenoate + NADPH + H(+). The enzyme catalyses an n-alkanal + NADP(+) = an alk-2-enal + NADPH + H(+). It carries out the reaction hexanal + NADP(+) = (E)-hex-2-enal + NADPH + H(+). It catalyses the reaction octanal + NADP(+) = (2E)-octenal + NADPH + H(+). The catalysed reaction is decanal + NADP(+) = (2E)-decenal + NADPH + H(+). The enzyme catalyses dodecanal + NADP(+) = (2E)-dodecenal + NADPH + H(+). It carries out the reaction 4-hydroxynonanal + NADP(+) = (E)-4-hydroxynon-2-enal + NADPH + H(+). It catalyses the reaction pentan-2-one + NADP(+) = (E)-pent-3-en-2-one + NADPH + H(+). The catalysed reaction is nonan-2-one + NADP(+) = (3E)-nonen-2-one + NADPH + H(+). Its function is as follows. NAD(P)H-dependent oxidoreductase involved in metabolic inactivation of pro- and anti-inflammatory eicosanoids: prostaglandins (PG), leukotrienes (LT) and lipoxins (LX). Catalyzes with high efficiency the reduction of the 13,14 double bond of 15-oxoPGs, including 15-oxo-PGE1, 15-oxo-PGE2, 15-oxo-PGF1-alpha and 15-oxo-PGF2-alpha. Catalyzes with lower efficiency the oxidation of the hydroxyl group at C12 of LTB4 and its derivatives, converting them into biologically less active 12-oxo-LTB4 metabolites. Reduces 15-oxo-LXA4 to 13,14 dihydro-15-oxo-LXA4, enhancing neutrophil recruitment at the inflammatory site. Plays a role in metabolic detoxification of alkenals and ketones. Reduces alpha,beta-unsaturated alkenals and ketones, particularly those with medium-chain length, showing highest affinity toward (2E)-decenal and (3E)-3-nonen-2-one. May inactivate 4-hydroxy-2-nonenal, a cytotoxic lipid constituent of oxidized low-density lipoprotein particles. This chain is Prostaglandin reductase 1 (Ptgr1), found in Mus musculus (Mouse).